The sequence spans 244 residues: Probable transcriptional regulatory protein CBU_1566 (244 aa).

Belongs to the TACO1 family.

It is found in the cytoplasm. The protein is Probable transcriptional regulatory protein CBU_1566 of Coxiella burnetii (strain RSA 493 / Nine Mile phase I).